The chain runs to 237 residues: Neural retina-specific leucine zipper protein (237 aa).

Glycyl lysine isopeptide (Lys-Gly) (interchain with G-Cter in SUMO) cross-links involve residues Lys20 and Lys24. The tract at residues 23 to 57 (VKREPSEGRPGPPTASLGSTPYSSVPPSPTFSEPG) is disordered. The minimal transactivation domain (MTD) stretch occupies residues 30–93 (GRPGPPTASL…AGEALGLSPE (64 aa)). Residues 159–185 (RLKQRRRTLKNRGYAQACRSKRLQQRR) are basic motif. The region spanning 159-222 (RLKQRRRTLK…DLYKARCDRL (64 aa)) is the bZIP domain. The interval 187-208 (LEAERARLAAQLDALRAEVARL) is leucine-zipper.

Belongs to the bZIP family. In terms of assembly, interacts with FIZ1; this interaction represses transactivation. Interacts (via the leucine-zipper domain) with CRX. Post-translationally, phosphorylated. In terms of processing, disumoylated at Lys-20. Sumoylation modulates the transcriptional activity of NRL on RHO and NR2E3 promoters, and is required for normal rod differentiation. In terms of tissue distribution, expressed in the brain and the retina. Expressed strongly in rod and cone cells (at protein level).

It localises to the cytoplasm. The protein resides in the nucleus. Functionally, acts as a transcriptional activator which regulates the expression of several rod-specific genes, including RHO and PDE6B. Also functions as a transcriptional coactivator, stimulating transcription mediated by the transcription factor CRX and NR2E3. Binds to the rhodopsin promoter in a sequence-specific manner. The sequence is that of Neural retina-specific leucine zipper protein (NRL) from Homo sapiens (Human).